We begin with the raw amino-acid sequence, 974 residues long: Membrane-associated phosphatidylinositol transfer protein 3 (974 aa).

Phosphoserine is present on residues serine 30, serine 31, serine 109, serine 295, serine 298, serine 321, serine 343, and serine 495. The segment at 284–304 is disordered; it reads GDSPASSSRKGSISSTQDTPV. Polar residues predominate over residues 292–302; sequence RKGSISSTQDT. Disordered regions lie at residues 323-346 and 491-536; these read IDIS…SDSS and SSRD…SMAP. The 205-residue stretch at 390–594 folds into the DDHD domain; the sequence is FDFDVSDFFL…VAFILRQVMR (205 aa). Residues 520–533 are compositionally biased toward low complexity; it reads EGSSHSESSESSDS. A phosphoserine mark is found at serine 612, serine 907, serine 928, and serine 946. Residues 927–974 form a disordered region; the sequence is MSVQQPDPPAANPKPERAQSQPESDKDHERPLPALSWARGPPKFESVP.

The protein belongs to the PtdIns transfer protein family. PI transfer class IIA subfamily. As to quaternary structure, interacts with PTK2B via its C-terminus. In terms of tissue distribution, detected in brain and spleen, and at low levels in ovary.

The protein resides in the endomembrane system. Catalyzes the transfer of phosphatidylinositol and phosphatidylcholine between membranes (in vitro). Binds calcium ions. This Homo sapiens (Human) protein is Membrane-associated phosphatidylinositol transfer protein 3 (PITPNM3).